A 318-amino-acid chain; its full sequence is Ethylene-responsive transcription factor FZP (318 aa).

Residues 1 to 15 (MNTRGSGSSSSSSSS) show a composition bias toward low complexity. Disordered regions lie at residues 1 to 59 (MNTR…GRFL) and 158 to 178 (SYGH…SGAS). The span at 25–37 (PPKPASQPSPPSS) shows a compositional bias: pro residues. Residues 57–114 (RFLGVRRRPWGRYAAEIRDPTTKERHWLGTFDTAQEAALAYDRAALSMKGAQARTNFV) constitute a DNA-binding region (AP2/ERF). The span at 160-171 (GHHHHHHHHHGH) shows a compositional bias: basic residues.

This sequence belongs to the AP2/ERF transcription factor family. ERF subfamily.

The protein resides in the nucleus. In terms of biological role, required to prevent the formation of axillary meristems within the spikelet meristem and permit the subsequent establishment of floral meristem identity. Mediates the transition from spikelet to floret meristem. Determines the transition from panicle branching to spikelet formation. May specify floral organ identity by regulating the class B genes (Agamous-like genes) MADS6 and MADS17, as well as class E genes MADS1, MADS7 and MADS8 in floral meristem. Possesses transactivation activity. The chain is Ethylene-responsive transcription factor FZP from Oryza sativa subsp. japonica (Rice).